Here is a 220-residue protein sequence, read N- to C-terminus: Ras-related protein Rab-11B (220 aa).

18–25 (GDSGVGKS) contributes to the GTP binding site. The Effector region motif lies at 40–48 (KLSTIGVEF). Residues 66 to 70 (DTAGQ) and 124 to 127 (NKSD) each bind GTP. Residues Cys219 and Cys220 are each lipidated (S-geranylgeranyl cysteine).

The protein belongs to the small GTPase superfamily. Rab family.

Its subcellular location is the cell membrane. In Dictyostelium discoideum (Social amoeba), this protein is Ras-related protein Rab-11B (rab11B).